The primary structure comprises 711 residues: MKRLTYPLSSLRNIVEHFHCNTFHKPISSLSISPTLKSESREPSSTQDPYSLLKQDPVDICLSLWVKSFSSPPSATFSNLTGFLSKFDLWVLAYQRTCAHVTGTFPPRNAIHANALRSLLSLQNAVTRSGGKFRWNDKMNQYVRSPKDKISMNGGEGMSKGKVRRIIESEEPIFQDRVVHEVLLMILEPFFEARFSSKSHGFRPGRNPHTVIRTIRSNFAGYLWFMKGDVSEMLDHVDVDVVMNCLQKVVKDRKVLGLIESSLKFSDKRVLKRVVEKHGNDNGLGTKRRIEREKRNKTKKKILSDDEPKPDPYWLRTFYSFAPKEAAKVPSYGYCGVLSPLLANVCLNELDRFMETKIVEYFSPCKDDSIWKESIEDGCHNPAWPEFVPSSGKEKTRKMDYIRYGGHFLIGIRGPREDAVKMRKEIIDFCDRVFGVRLDNSKLEIEHISRGIQFLDHIICRRVIYPTLRYTGSGGSIVSKKGVGTLLSVSASLEQCIRQFRRLAFVKGDKDPEPLPCNPMLYSSQSHSNSQMNKFLETMADWYKYADNRKKAVGFCAYVIRSSLAKLYAARYRLKSRAKVYSIASRDLSHPLSESSNNSAPEYSDLLRMGLVDAIEGVQFSRMSLIPSCDYTPFPRNWIPNHEQVLQEYIRLQDPKFFCGLHRSIKREGLTLPQDEISEAVWDFKTLGAWRSKYENKREADDGLQKLDSQT.

The Reverse transcriptase domain maps to 147 to 459 (KDKISMNGGE…RGIQFLDHII (313 aa)). An intron maturase type-2 region spans residues 484–653 (GTLLSVSASL…QVLQEYIRLQ (170 aa)).

This sequence belongs to the plant nuclear intron maturase (nMat) family. As to expression, expressed at low levels in seedlings and accumulates in adult plants.

The protein localises to the mitochondrion. Functionally, nuclear-encoded maturase required for splicing of group-II introns in mitochondria. Necessary for mitochondrial biogenesis during early developmental stages. Involved in the splicing of mitochondrial NAD4 transcripts. Required for trans-splicing of NAD1 intron 1 and also functions in cis-splicing of NAD2 intron 1 and NAD4 intron 2. Required for the regulation of fundamental metabolic pathways such as amino acid metabolism, triacylglycerol degradation and polysaccharide synthesis (cellulose and starch) during the early stage of plant growth. Implicated in stress responses. This is Nuclear intron maturase 1, mitochondrial from Arabidopsis thaliana (Mouse-ear cress).